A 1093-amino-acid polypeptide reads, in one-letter code: Protein AF-17 (1093 aa).

A PHD-type 1 zinc finger spans residues 5–57 (VGGCCVCSDERGWAENPLVYCDGHACSVAVHQACYGIVQVPTGPWFCRKCESQ). Residues 62–95 (RVRCELCPHKDGALKRTDNGGWAHVVCALYIPEV) form a C2HC pre-PHD-type zinc finger. The PHD-type 2 zinc finger occupies 118–181 (KTCYICEEQG…KYCGYCKYHF (64 aa)). Residues 185 to 500 (KTSRHSSGGG…GGPAAPSLPS (316 aa)) form a disordered region. Gly residues predominate over residues 191-212 (SGGGGGGAGGGGGSMGGGGSGF). The segment covering 231–255 (PTHHERGQKKSRKDKERLKQKHKKR) has biased composition (basic residues). Ser258 bears the Phosphoserine mark. The span at 258–268 (SPPSILTPPVV) shows a compositional bias: pro residues. Over residues 282–300 (SHHEASTQETSESSRESKG) the composition is skewed to basic and acidic residues. The span at 301 to 316 (KKSSSHSLSHKGKKLS) shows a compositional bias: basic residues. Residues 317-340 (SGKGVSSFTSASSSSSSSSSSSGG) are compositionally biased toward low complexity. Over residues 345-354 (AVSSLQSSPD) the composition is skewed to polar residues. A compositionally biased stretch (pro residues) spans 374–388 (APAPSAPPSPSAPEP). Phosphoserine is present on residues Ser378 and Ser423. The span at 410–425 (STTTSSSGRARAPSPG) shows a compositional bias: low complexity. Thr451 carries the phosphothreonine modification. Basic residues predominate over residues 465–484 (EKKHKASKRSRHGPGRPKGS). Positions 729–764 (LQKENQRLQEQILSLTAKKERLQILNVQLSVPFPAL) are leucine-zipper. Disordered stretches follow at residues 775 to 871 (VPGP…RAPG) and 1060 to 1093 (QTNP…QEKG). Low complexity predominate over residues 787-796 (SSDSLSTSKS). The span at 804-813 (GLDNSLSTSS) shows a compositional bias: polar residues. Low complexity-rich tracts occupy residues 818 to 832 (SGCP…SFHS) and 839 to 853 (LLQQ…ALPG).

Interacts with histone H3; interaction is necessary for MLLT6 binding to nucleosomes; interaction is inhibited by histone H3 'Lys-27' methylations (H3K27me1, H3K27me2 and H3K27me3).

It is found in the nucleus. The polypeptide is Protein AF-17 (MLLT6) (Homo sapiens (Human)).